Consider the following 1779-residue polypeptide: MLPFWKRLLYAAVIAGALVGADAQFWKTAGTAGSIQDSVKHYNRNEPKFPIDDSYDIVDSAGVARGDLPPKNCTAGYAGCVPKCIAEKGNRGLPGPLGPTGLKGEMGFPGMEGPSGDKGQKGDPGPYGQRGDKGERGSPGLHGQAGVPGVQGPAGNPGAPGINGKDGCDGQDGIPGLEGLSGMPGPRGYAGQLGSKGEKGEPAKENGDYAKGEKGEPGWRGTAGLAGPQGFPGEKGERGDSGPYGAKGPRGEHGLKGEKGASCYGPMKPGAPGIKGEKGEPASSFPVKPTHTVMGPRGDMGQKGEPGLVGRKGEPGPEGDTGLDGQKGEKGLPGGPGDRGRQGNFGPPGSTGQKGDRGEPGLNGLPGNPGQKGEPGRAGATGKPGLLGPPGPPGGGRGTPGPPGPKGPRGYVGAPGPQGLNGVDGLPGPQGYNGQKGGAGLPGRPGNEGPPGKKGEKGTAGLNGPKGSIGPIGHPGPPGPEGQKGDAGLPGYGIQGSKGDAGIPGYPGLKGSKGERGFKGNAGAPGDSKLGRPGTPGAAGAPGQKGDAGRPGTPGQKGDMGIKGDVGGKCSSCRAGPKGDKGTSGLPGIPGKDGARGPPGERGYPGERGHDGINGQTGPPGEKGEDGRTGLPGATGEPGKPALCDLSLIEPLKGDKGYPGAPGAKGVQGFKGAEGLPGIPGPKGEFGFKGEKGLSGAPGNDGTPGRAGRDGYPGIPGQSIKGEPGFHGRDGAKGDKGSFGRSGEKGEPGSCALDEIKMPAKGNKGEPGQTGMPGPPGEDGSPGERGYTGLKGNTGPQGPPGVEGPRGLNGPRGEKGNQGAVGVPGNPGKDGLRGIPGRNGQPGPRGEPGISRPGPMGPPGLNGLQGEKGDRGPTGPIGFPGADGSVGYPGDRGDAGLPGVSGRPGIVGEKGDVGPIGPAGVAGPPGVPGIDGVRGRDGAKGEPGSPGLVGMPGNKGDRGAPGNDGPKGFAGVTGAPGKRGPAGIPGVSGAKGDKGATGLTGNDGPVGGRGPPGAPGLMGIKGDQGLAGAPGQQGLDGMPGEKGNQGFPGLDGPPGLPGDASEKGQKGEPGPSGLRGDTGPAGTPGWPGEKGLPGLAVHGRAGPPGEKGDQGRSGIDGRDGINGEKGEQGLQGVWGQPGEKGSVGAPGIPGAPGMDGLPGAAGAPGAVGYPGDRGDKGEPGLSGLPGLKGETGPVGLQGFTGAPGPKGERGIRGQPGLPATVPDIRGDKGSQGERGYTGEKGEQGERGLTGPAGVAGAKGDRGLQGPPGASGLNGIPGAKGDIGPRGEIGYPGVTIKGEKGLPGRPGRNGRQGLIGAPGLIGERGLPGLAGEPGLVGLPGPIGPAGSKGERGLAGSPGQPGQDGFPGAPGLKGDTGPQGFKGERGLNGFEGQKGDKGDRGLQGPSGLPGLVGQKGDTGYPGLNGNDGPVGAPGERGFTGPKGRDGRDGTPGLPGQKGEPGMLPPPGPKGEPGQPGRNGPKGEPGRPGERGLIGIQGERGEKGERGLIGETGNVGRPGPKGDRGEPGERGYEGAIGLIGQKGEPGAPAPAALDYLTGILITRHSQSETVPACSAGHTELWTGYSLLYVDGNDYAHNQDLGSPGSCVPRFSTLPVLSCGQNNVCNYASRNDKTFWLTTNAAIPMMPVENIEIRQYISRCVVCEAPANVIAVHSQTIEVPDCPNGWEGLWIGYSFLMHTAVGNGGGGQALQSPGSCLEDFRATPFIECNGAKGTCHFYETMTSFWMYNLESSQPFERPQQQTIKAGERQSHVSRCQVCMKNSS.

Residues 1–23 form the signal peptide; sequence MLPFWKRLLYAAVIAGALVGADA. Asn72 is a glycosylation site (N-linked (GlcNAc...) asparagine). 4 disordered regions span residues 89–643, 655–1187, 1200–1285, and 1336–1530; these read GNRG…KPAL, DKGY…LPGL, TGAP…IGPR, and GLPG…RGYE. A compositionally biased stretch (low complexity) spans 144 to 163; it reads QAGVPGVQGPAGNPGAPGIN. Composition is skewed to basic and acidic residues over residues 196 to 217 and 249 to 259; these read KGEK…KGEP and PRGEHGLKGEK. The segment covering 360-369 has biased composition (low complexity); that stretch reads PGLNGLPGNP. Positions 434–443 are enriched in gly residues; that stretch reads GQKGGAGLPG. Residues 531 to 545 show a composition bias toward low complexity; that stretch reads GRPGTPGAAGAPGQK. The span at 724 to 747 shows a compositional bias: basic and acidic residues; the sequence is PGFHGRDGAKGDKGSFGRSGEKGE. Low complexity-rich tracts occupy residues 913–931 and 1015–1036; these read VGPI…PGID and PGLM…QGLD. The span at 1106–1127 shows a compositional bias: basic and acidic residues; it reads EKGDQGRSGIDGRDGINGEKGE. A compositionally biased stretch (low complexity) spans 1151 to 1170; the sequence is APGMDGLPGAAGAPGAVGYP. 3 stretches are compositionally biased toward basic and acidic residues: residues 1224-1245, 1496-1505, and 1517-1529; these read IRGD…EQGE, ERGEKGERGL, and PKGD…ERGY. The Collagen IV NC1 domain occupies 1555 to 1778; sequence GILITRHSQS…SRCQVCMKNS (224 aa). Cystine bridges form between Cys1570/Cys1659, Cys1603/Cys1656, Cys1615/Cys1621, Cys1678/Cys1774, Cys1712/Cys1771, and Cys1724/Cys1731.

Belongs to the type IV collagen family. As to quaternary structure, trimers of two alpha 1(IV) and one alpha 2(IV) chain. Type IV collagen forms a mesh-like network linked through intermolecular interactions between 7S domains and between NC1 domains. In terms of processing, prolines at the third position of the tripeptide repeating unit (G-X-Y) are hydroxylated in some or all of the chains. Post-translationally, type IV collagens contain numerous cysteine residues which are involved in inter- and intramolecular disulfide bonding. 12 of these, located in the NC1 domain, are conserved in all known type IV collagens.

The protein resides in the secreted. Its subcellular location is the extracellular space. It localises to the extracellular matrix. The protein localises to the basement membrane. Its function is as follows. Collagen type IV is specific for basement membranes. The protein is Collagen alpha-1(IV) chain of Drosophila melanogaster (Fruit fly).